A 572-amino-acid polypeptide reads, in one-letter code: Proteinaceous RNase P 1, chloroplastic/mitochondrial (572 aa).

The transit peptide at 1-70 directs the protein to the chloroplast and mitochondrion; the sequence is MLRLTCFTPS…SRHLCTLPLA (70 aa). 4 PPR repeats span residues 96 to 130, 136 to 174, 175 to 209, and 210 to 244; these read PEAL…GVQL, NVLL…KVVP, NEAT…GIQP, and RLRS…EVVP. In terms of domain architecture, PRORP spans 338–565; that stretch reads MDENGVCKCC…DLQTSRQWLC (228 aa). The Zn(2+) site is built by Cys344 and Cys347. Positions 399, 474, 475, and 493 each coordinate Mn(2+). Zn(2+) is bound by residues His548 and Cys565.

The protein belongs to the PPR family. P subfamily. Mg(2+) is required as a cofactor. It depends on Mn(2+) as a cofactor.

The protein localises to the mitochondrion. It is found in the plastid. Its subcellular location is the chloroplast. The catalysed reaction is Endonucleolytic cleavage of RNA, removing 5'-extranucleotides from tRNA precursor.. Functionally, endonuclease RNase P responsible for the 5' maturation of tRNA precursors. Preferentially cleaves at the unusual cleavage site, but also able to cleave at the classical cleavage site. Also involved in the maturation of mRNAs in mitochondria. This is Proteinaceous RNase P 1, chloroplastic/mitochondrial (PRORP1) from Arabidopsis thaliana (Mouse-ear cress).